The chain runs to 348 residues: Protein RecA (348 aa).

65–72 (GPESSGKT) contacts ATP.

The protein belongs to the RecA family.

It is found in the cytoplasm. Its function is as follows. Can catalyze the hydrolysis of ATP in the presence of single-stranded DNA, the ATP-dependent uptake of single-stranded DNA by duplex DNA, and the ATP-dependent hybridization of homologous single-stranded DNAs. It interacts with LexA causing its activation and leading to its autocatalytic cleavage. This Vibrio anguillarum (strain ATCC 68554 / 775) (Listonella anguillarum) protein is Protein RecA.